A 217-amino-acid chain; its full sequence is MKFNNMIDHTLLKAEATTKDVDKLIAEAKEYGFKSVCVNSSWVKYVKEKLKGSDVLVCAVVGFPLGAMSMQAKVFEAKLAIDHGADEIDMVINIGRFRDDQHDYVLNEIKKIKEVMGNKVLKVIIETALLDKKGIKDATNIVLQSGAEFIKTSTGFSYSGAQVEDIEVFKEILGDKVAIKASGGIKNLNDMKNLYKAGARRFGTSAAVAIVKEQGKQ.

The Proton donor/acceptor role is filled by D89. K151 serves as the catalytic Schiff-base intermediate with acetaldehyde. K180 acts as the Proton donor/acceptor in catalysis.

It belongs to the DeoC/FbaB aldolase family. DeoC type 1 subfamily.

The protein resides in the cytoplasm. The catalysed reaction is 2-deoxy-D-ribose 5-phosphate = D-glyceraldehyde 3-phosphate + acetaldehyde. The protein operates within carbohydrate degradation; 2-deoxy-D-ribose 1-phosphate degradation; D-glyceraldehyde 3-phosphate and acetaldehyde from 2-deoxy-alpha-D-ribose 1-phosphate: step 2/2. Its function is as follows. Catalyzes a reversible aldol reaction between acetaldehyde and D-glyceraldehyde 3-phosphate to generate 2-deoxy-D-ribose 5-phosphate. In Mycoplasma mobile (strain ATCC 43663 / 163K / NCTC 11711) (Mesomycoplasma mobile), this protein is Deoxyribose-phosphate aldolase.